Consider the following 879-residue polypeptide: Beta-mannosidase (879 aa).

An N-terminal signal peptide occupies residues 1 to 17; the sequence is MLLRLLLLLAPCGAGFA. 2 N-linked (GlcNAc...) asparagine glycosylation sites follow: N35 and N77. A disulfide bridge connects residues C167 and C176. Residue 190-192 coordinates substrate; that stretch reads WDW. N-linked (GlcNAc...) asparagine glycosylation occurs at N297. Residue N456 coordinates substrate. Catalysis depends on E457, which acts as the Proton donor. Intrachain disulfides connect C540-C629, C732-C761, and C764-C769. E554 acts as the Nucleophile in catalysis. N-linked (GlcNAc...) asparagine glycosylation is present at N803.

The protein belongs to the glycosyl hydrolase 2 family. In terms of assembly, monomer. N-glycosylated. As to expression, detected in kidney (at protein level). Found in spleen and to a lesser extent in liver. Not detected in kidney or brain.

It localises to the lysosome. The catalysed reaction is Hydrolysis of terminal, non-reducing beta-D-mannose residues in beta-D-mannosides.. It participates in glycan metabolism; N-glycan degradation. Its function is as follows. Exoglycosidase that cleaves the single beta-linked mannose residue from the non-reducing end of all N-linked glycoprotein oligosaccharides. In Capra hircus (Goat), this protein is Beta-mannosidase (MANBA).